The chain runs to 57 residues: Large ribosomal subunit protein bL32A (57 aa).

It belongs to the bacterial ribosomal protein bL32 family.

In Streptomyces coelicolor (strain ATCC BAA-471 / A3(2) / M145), this protein is Large ribosomal subunit protein bL32A (rpmF1).